The following is a 1096-amino-acid chain: Inactive phospholipase C-like protein 1 (1096 aa).

Positions M1 to P101 are disordered. Residues G26–G41 show a composition bias toward low complexity. Phosphoserine is present on residues S48 and S78. Residues P83–L222 are interaction with PPP1C. T94 bears the Phosphothreonine mark. S96 is subject to Phosphoserine. The PH domain occupies S114–S224. Positions Q399–K543 constitute a PI-PLC X-box domain. The interval K544–R568 is interaction with GABA A beta subunit. Phosphothreonine is present on T557. S570 bears the Phosphoserine mark. The region spanning L586–R702 is the PI-PLC Y-box domain. In terms of domain architecture, C2 spans R702–S831. A coiled-coil region spans residues D1040–C1060. The disordered stretch occupies residues K1067 to L1096. The segment covering A1075–L1096 has biased composition (basic and acidic residues). At S1080 the chain carries Phosphoserine.

Belongs to the PRIP family. As to quaternary structure, interacts with PPP2CA, GABA receptor beta subunits, GABA receptor gamma-2 subunits. Interacts with Ins(1,4,5)P3, Ins(1,4,5,6)P4, GABARAP, and PPP1C. May form a ternary complex with GABA receptor beta subunit and GABARAP. The formation of a ternary complex with GABA receptor beta subunit and GABARAP could be the key step for facilitating the association of GABARAP with the GABA receptor gamma-2 subunit and to allow it to be transported at the right destination. Post-translationally, phosphorylation of Thr-94 resulted in dissociation of PPP1C from PRIP1. In vitro, phosphorylated by the catalytic subunit of PKA. Expressed in brain. Found in the granular cell and Purkinje cell layers in the cerebellum; and in the hippocampal pyramidal cells, dentate granule cells and pyramidal granule cells of the cerebral cortex in the cerebrum.

The protein localises to the cytoplasm. Involved in an inositol phospholipid-based intracellular signaling cascade. Shows no PLC activity to phosphatidylinositol 4,5-bisphosphate and phosphatidylinositol. Component in the phospho-dependent endocytosis process of GABA A receptor. Acts as an inhibitor of PPP1C. This chain is Inactive phospholipase C-like protein 1 (Plcl1), found in Rattus norvegicus (Rat).